A 1488-amino-acid polypeptide reads, in one-letter code: Calmodulin binding protein PICBP (1488 aa).

4 disordered regions span residues 1–31 (MSNP…RKMW), 63–112 (TAES…SRIS), 280–329 (GPLG…GRSS), and 378–414 (HDHD…EEDG). Residues 18-31 (SSRRVHKRRERKMW) show a composition bias toward basic residues. Over residues 76–86 (DDSRTYSKSSD) the composition is skewed to basic and acidic residues. Basic residues predominate over residues 98–107 (SVKRRAKSKS). Over residues 297-312 (DNVDGDSDEEVFEEEV) the composition is skewed to acidic residues. Calmodulin-binding regions lie at residues 493–592 (TFHM…SLIP) and 831–938 (NSLK…DIVL). Disordered regions lie at residues 816 to 844 (IPDS…GETK) and 941 to 971 (HDTP…EGCE). Composition is skewed to basic and acidic residues over residues 833-844 (LKEEKEHQGETK) and 954-971 (RNND…EGCE). The tract at residues 1135–1229 (EKRVKGWNNV…SLLAQAFDTI (95 aa)) is calmodulin-binding. Disordered regions lie at residues 1232 to 1252 (QDMG…ISRQ) and 1316 to 1340 (EKNQ…DTSV). Low complexity predominate over residues 1235–1252 (GSGSTPGSAASSRNISRQ). Residues 1316 to 1328 (EKNQTLPEETRKE) show a composition bias toward basic and acidic residues. The segment at 1379–1483 (RQKSETLQVS…QLLVQAFESL (105 aa)) is calmodulin-binding.

Binds calmodulin in a calcium-dependent manner in vitro. May play a role in general plant defense including R gene-mediated responses. The chain is Calmodulin binding protein PICBP from Arabidopsis thaliana (Mouse-ear cress).